The following is a 462-amino-acid chain: Glycerol-3-phosphate dehydrogenase [NAD(+)] GPDHC1, cytosolic (462 aa).

Residues 48–53 (GAGAWG), Lys196, and Ala235 contribute to the NAD(+) site. Lys196 provides a ligand contact to substrate. Catalysis depends on Lys285, which acts as the Proton acceptor. Arg347 and Gln375 together coordinate NAD(+). 347 to 348 (RN) is a substrate binding site.

This sequence belongs to the NAD-dependent glycerol-3-phosphate dehydrogenase family. As to expression, expressed in roots, leaves, flowers and siliques.

Its subcellular location is the cytoplasm. It localises to the cytosol. It carries out the reaction sn-glycerol 3-phosphate + NAD(+) = dihydroxyacetone phosphate + NADH + H(+). Functionally, involved in cell redox homeostasis. Required for maintaining a steady state cellular NADH/NAD(+) ratio through a mitochondrial glycerol-3-phosphate redox shuttle. May function with the mitochondrial FAD-dependent glycerol-3-phosphate dehydrogenase SDP6 to shuttle reducing equivalents into the mitochondria for respiration. In Arabidopsis thaliana (Mouse-ear cress), this protein is Glycerol-3-phosphate dehydrogenase [NAD(+)] GPDHC1, cytosolic (GPDHC1).